The following is a 361-amino-acid chain: Probable cinnamyl alcohol dehydrogenase (361 aa).

Cysteine 48 provides a ligand contact to Zn(2+). Threonine 50 serves as a coordination point for NADP(+). 7 residues coordinate Zn(2+): histidine 70, glutamate 71, cysteine 101, cysteine 104, cysteine 107, cysteine 115, and cysteine 164. NADP(+) contacts are provided by residues threonine 168, 189 to 194 (GLGGVG), 212 to 217 (SSSDKK), threonine 252, glycine 276, and 299 to 301 (SFI).

This sequence belongs to the zinc-containing alcohol dehydrogenase family. In terms of assembly, homodimer. It depends on Zn(2+) as a cofactor.

The catalysed reaction is (E)-cinnamyl alcohol + NADP(+) = (E)-cinnamaldehyde + NADPH + H(+). The enzyme catalyses (E)-coniferol + NADP(+) = (E)-coniferaldehyde + NADPH + H(+). It catalyses the reaction (E)-sinapyl alcohol + NADP(+) = (E)-sinapaldehyde + NADPH + H(+). It carries out the reaction (E)-4-coumaroyl alcohol + NADP(+) = (E)-4-coumaraldehyde + NADPH + H(+). The catalysed reaction is (E)-caffeyl alcohol + NADP(+) = (E)-caffeyl aldehyde + NADPH + H(+). The protein operates within aromatic compound metabolism; phenylpropanoid biosynthesis. Involved in lignin biosynthesis. Catalyzes the final step specific for the production of lignin monomers. Catalyzes the NADPH-dependent reduction of coniferaldehyde, 5-hydroxyconiferaldehyde, sinapaldehyde, 4-coumaraldehyde and caffeyl aldehyde to their respective alcohols. The polypeptide is Probable cinnamyl alcohol dehydrogenase (Lolium perenne (Perennial ryegrass)).